The following is a 150-amino-acid chain: Snaclec 7 (150 aa).

Positions 1 to 23 are cleaved as a signal peptide; the sequence is MGRFISISFGLLVVFLSLSGTGA. 3 disulfide bridges follow: cysteine 27-cysteine 38, cysteine 55-cysteine 144, and cysteine 121-cysteine 136. In terms of domain architecture, C-type lectin spans 34-145; sequence YEGYCYKVFN…CNDPRYFVCK (112 aa).

This sequence belongs to the snaclec family. As to quaternary structure, heterodimer; disulfide-linked.

It localises to the secreted. Its function is as follows. Interferes with one step of hemostasis (modulation of platelet aggregation, or coagulation cascade, for example). The polypeptide is Snaclec 7 (Daboia siamensis (Eastern Russel's viper)).